Consider the following 829-residue polypeptide: ATP-dependent RNA helicase drs1 (829 aa).

2 disordered regions span residues 1–96 (MAPS…MDTE) and 145–295 (RRER…MSSF). The span at 20–32 (DNEEDIPLEEEQE) shows a compositional bias: acidic residues. A compositionally biased stretch (basic residues) spans 48–59 (KQKKKNNKKSKK). Positions 63-78 (TEDDDDEAETKEDDAA) are enriched in acidic residues. A compositionally biased stretch (basic and acidic residues) spans 150 to 163 (AAKEGKTTATKEEE). 4 stretches are compositionally biased toward acidic residues: residues 164-190 (DKME…DGVL), 218-228 (DGEDEDSEGED), 235-246 (DEDEGDASDDDS), and 258-271 (QSSD…EEEE). Basic and acidic residues predominate over residues 272–291 (AKMKEFFAPEEENQPKKKGE). Positions 293–321 (SSFQEMSLSRPILRGLTSVGFTKPTPIQA) match the Q motif motif. A Helicase ATP-binding domain is found at 324–498 (IPISLMGKDV…RAGLNKPVRI (175 aa)). 337–344 (AVTGSGKT) provides a ligand contact to ATP. The DEAD box signature appears at 446-449 (DEAD). Residues 528–707 (YLLHICKTIY…EKQLQNMEMQ (180 aa)) form the Helicase C-terminal domain. The tract at residues 728–829 (TWFETQEDKK…KGGKGKGRRK (102 aa)) is disordered. The segment covering 749-791 (GVRDKLKSKNEGKLSNKDRKKLDTMQERKQERTYKKGSAERAG) has biased composition (basic and acidic residues). Positions 800 to 815 (KVVKKVGRSAGPKKKG) are enriched in basic residues.

It belongs to the DEAD box helicase family. DDX27/DRS1 subfamily. In terms of assembly, associates with pre-ribosomal particles.

The protein resides in the nucleus. The protein localises to the nucleolus. The catalysed reaction is ATP + H2O = ADP + phosphate + H(+). In terms of biological role, ATP-binding RNA helicase involved in ribosome assembly. The polypeptide is ATP-dependent RNA helicase drs1 (drh-11) (Neurospora crassa (strain ATCC 24698 / 74-OR23-1A / CBS 708.71 / DSM 1257 / FGSC 987)).